Consider the following 338-residue polypeptide: uncharacterized protein (338 aa).

An N-terminal signal peptide occupies residues 1–29 (MIKQLYKNITICSLAISTALTVFPATSYA).

This sequence belongs to the aerolysin family.

This is an uncharacterized protein from Staphylococcus aureus (strain Mu50 / ATCC 700699).